Here is a 176-residue protein sequence, read N- to C-terminus: Acireductone dioxygenase (176 aa).

H100, H102, E106, and H145 together coordinate Fe(2+). The Ni(2+) site is built by H100, H102, E106, and H145.

Belongs to the acireductone dioxygenase (ARD) family. As to quaternary structure, monomer. Fe(2+) is required as a cofactor. Requires Ni(2+) as cofactor.

It carries out the reaction 1,2-dihydroxy-5-(methylsulfanyl)pent-1-en-3-one + O2 = 3-(methylsulfanyl)propanoate + CO + formate + 2 H(+). The enzyme catalyses 1,2-dihydroxy-5-(methylsulfanyl)pent-1-en-3-one + O2 = 4-methylsulfanyl-2-oxobutanoate + formate + 2 H(+). Its pathway is amino-acid biosynthesis; L-methionine biosynthesis via salvage pathway; L-methionine from S-methyl-5-thio-alpha-D-ribose 1-phosphate: step 5/6. Functionally, catalyzes 2 different reactions between oxygen and the acireductone 1,2-dihydroxy-3-keto-5-methylthiopentene (DHK-MTPene) depending upon the metal bound in the active site. Fe-containing acireductone dioxygenase (Fe-ARD) produces formate and 2-keto-4-methylthiobutyrate (KMTB), the alpha-ketoacid precursor of methionine in the methionine recycle pathway. Ni-containing acireductone dioxygenase (Ni-ARD) produces methylthiopropionate, carbon monoxide and formate, and does not lie on the methionine recycle pathway. This is Acireductone dioxygenase from Bacillus pumilus (strain SAFR-032).